A 288-amino-acid chain; its full sequence is 2-dehydro-3-deoxyphosphooctonate aldolase (288 aa).

It belongs to the KdsA family.

The protein resides in the cytoplasm. The enzyme catalyses D-arabinose 5-phosphate + phosphoenolpyruvate + H2O = 3-deoxy-alpha-D-manno-2-octulosonate-8-phosphate + phosphate. The protein operates within carbohydrate biosynthesis; 3-deoxy-D-manno-octulosonate biosynthesis; 3-deoxy-D-manno-octulosonate from D-ribulose 5-phosphate: step 2/3. It functions in the pathway bacterial outer membrane biogenesis; lipopolysaccharide biosynthesis. The protein is 2-dehydro-3-deoxyphosphooctonate aldolase of Bdellovibrio bacteriovorus (strain ATCC 15356 / DSM 50701 / NCIMB 9529 / HD100).